The sequence spans 396 residues: Elongation factor Tu (396 aa).

Positions 10–206 (KPHVNVGTIG…ALDTFIPEPT (197 aa)) constitute a tr-type G domain. A G1 region spans residues 19–26 (GHVDHGKT). GTP is bound at residue 19–26 (GHVDHGKT). Thr-26 lines the Mg(2+) pocket. Positions 60–64 (GITIS) are G2. The segment at 81-84 (DCPG) is G3. GTP-binding positions include 81-85 (DCPGH) and 136-139 (NKAD). The segment at 136–139 (NKAD) is G4. The segment at 174–176 (SAR) is G5.

The protein belongs to the TRAFAC class translation factor GTPase superfamily. Classic translation factor GTPase family. EF-Tu/EF-1A subfamily. As to quaternary structure, monomer.

The protein resides in the cytoplasm. It catalyses the reaction GTP + H2O = GDP + phosphate + H(+). GTP hydrolase that promotes the GTP-dependent binding of aminoacyl-tRNA to the A-site of ribosomes during protein biosynthesis. This chain is Elongation factor Tu, found in Xanthomonas oryzae pv. oryzae (strain MAFF 311018).